A 202-amino-acid polypeptide reads, in one-letter code: MATIVQCLSSCATLESQFKVLSLKGISCSSPSSSFSNRRGASATLSSSLSFSQSVSQCVAFSTGNLWVQKPMRQLIVCEAAAPTKKADSAAKRARQAEKRRVYNKSKKSEARTRMKKVLEALEGLKKKTDAQADEIVTVEKLIGEAYSAIDKAVKVKALHKNTGARRKSRLARRKKAVEIHHGWYVPDAAAAAPSEAVPMAA.

The N-terminal 79 residues, 1 to 79 (MATIVQCLSS…KPMRQLIVCE (79 aa)), are a transit peptide targeting the chloroplast. Residues 89 to 110 (SAAKRARQAEKRRVYNKSKKSE) are disordered.

Belongs to the bacterial ribosomal protein bS20 family. In terms of assembly, part of the 30S ribosomal subunit.

The protein localises to the plastid. It localises to the chloroplast. In terms of biological role, binds directly to 16S ribosomal RNA. The sequence is that of Small ribosomal subunit protein bS20c (RPS20) from Arabidopsis thaliana (Mouse-ear cress).